Reading from the N-terminus, the 551-residue chain is Transcription factor 7-like 1-B (551 aa).

Positions 1-11 (MPQLNSGGGDE) are enriched in gly residues. The segment at 1–61 (MPQLNSGGGD…SENHSSDSDS (61 aa)) is interaction with CTNNB1-A. Disordered stretches follow at residues 1–77 (MPQL…EKPR), 183–213 (GTPP…PYYP), 391–474 (WSAR…SLTT), and 492–515 (SPSS…SRPI). Composition is skewed to basic and acidic residues over residues 17-32 (ELIR…EKSP) and 52-77 (SENH…EKPR). Residues 109 to 312 (LGGHYLPNGA…SPNLSTKSNV (204 aa)) are interaction with AES and TLE4-A. A DNA-binding region (HMG box) is located at residues 324–392 (IKKPLNAFML…LHSQLYPSWS (69 aa)). Basic and acidic residues predominate over residues 407 to 416 (KQSPEMENYT). The interaction with CTBP-B stretch occupies residues 408–551 (QSPEMENYTK…PLSLVTRSSD (144 aa)). Low complexity predominate over residues 445–464 (SPATPSAALASPAAPAATHS). Over residues 465–474 (EQAQPLSLTT) the composition is skewed to polar residues.

Belongs to the TCF/LEF family. Interacts with csnk1e, ctnnb1-A, ctbp-B, dact1-A and gsk3b. May interact with ase and tle4-A. Interacts with tle1-B. Post-translationally, phosphorylated. Phosphorylation by csnk1e promotes binding to ctnnb1-A while phosphorylation by gsk3b may reverse this effect.

It localises to the nucleus. Its function is as follows. Participates in the Wnt signaling pathway. Binds to DNA and acts as a repressor in the absence of ctnnb1-A and possibly ctnnb1-B, and as an activator in the presence of these proteins. Required early in development for the establishment of the dorsal body axis in response to maternal Wnt signaling. The polypeptide is Transcription factor 7-like 1-B (tcf7l1-b) (Xenopus laevis (African clawed frog)).